A 392-amino-acid chain; its full sequence is F-box/kelch-repeat protein At4g39550 (392 aa).

Basic residues predominate over residues 1–12; it reads MSSPEKKRKTTK. Residues 1 to 27 form a disordered region; it reads MSSPEKKRKTTKKPSPTPQSTTPNPSL. Residues 18-27 show a composition bias toward low complexity; sequence PQSTTPNPSL. The region spanning 21 to 67 is the F-box domain; that stretch reads TTPNPSLPDDLVVSCLARVSRLYYPTLSLVSKSFRSLIASPDLYKTR. 3 Kelch repeats span residues 148–194, 195–242, and 244–285; these read NIYN…VVEG, KIYV…KSAV, and EGEI…VVEN.

Part of a SCF (ASK-cullin-F-box) protein ligase complex. Interacts with ASK13 and ASK14.

It functions in the pathway protein modification; protein ubiquitination. Component of SCF(ASK-cullin-F-box) E3 ubiquitin ligase complexes, which may mediate the ubiquitination and subsequent proteasomal degradation of target proteins. This is F-box/kelch-repeat protein At4g39550 from Arabidopsis thaliana (Mouse-ear cress).